A 240-amino-acid chain; its full sequence is NKG2-E type II integral membrane protein (240 aa).

Polar residues predominate over residues 1–12 (MSKQRGTFSEVS). Residues 1 to 31 (MSKQRGTFSEVSLAQDPKWQQRKPKGNKSSI) form a disordered region. At 1–70 (MSKQRGTFSE…CQGLLPPPEK (70 aa)) the chain is on the cytoplasmic side. A helical; Signal-anchor for type II membrane protein membrane pass occupies residues 71 to 93 (LTAEVLGIICIVLMATVLKTIVL). The Extracellular portion of the chain corresponds to 94–240 (IPFLEQNNSS…IMLTRLVLNS (147 aa)). N-linked (GlcNAc...) asparagine glycosylation occurs at N100. The 115-residue stretch at 116-230 (HCPEEWITYS…GSSRIIRRGF (115 aa)) folds into the C-type lectin domain. C117 and C128 are disulfide-bonded. 2 N-linked (GlcNAc...) asparagine glycosylation sites follow: N149 and N179. An intrachain disulfide couples C207 to C220.

As to quaternary structure, can form disulfide-bonded heterodimer with CD94. In terms of tissue distribution, natural killer cells.

Its subcellular location is the membrane. In terms of biological role, plays a role as a receptor for the recognition of MHC class I HLA-E molecules by NK cells and some cytotoxic T-cells. The protein is NKG2-E type II integral membrane protein (KLRC3) of Homo sapiens (Human).